The following is a 65-amino-acid chain: Large ribosomal subunit protein uL29 (65 aa).

It belongs to the universal ribosomal protein uL29 family.

The chain is Large ribosomal subunit protein uL29 from Psychrobacter arcticus (strain DSM 17307 / VKM B-2377 / 273-4).